Reading from the N-terminus, the 298-residue chain is Thymidylate synthase (298 aa).

Residues Arg-25 and Arg-159–Arg-160 contribute to the dUMP site. The active-site Nucleophile is Cys-179. Residues Arg-200–Asp-203, Asn-211, and His-241–Tyr-243 contribute to the dUMP site. Residue Asp-203 coordinates (6R)-5,10-methylene-5,6,7,8-tetrahydrofolate. A (6R)-5,10-methylene-5,6,7,8-tetrahydrofolate-binding site is contributed by Ala-297.

It belongs to the thymidylate synthase family. Bacterial-type ThyA subfamily. As to quaternary structure, homodimer.

The protein resides in the cytoplasm. The enzyme catalyses dUMP + (6R)-5,10-methylene-5,6,7,8-tetrahydrofolate = 7,8-dihydrofolate + dTMP. The protein operates within pyrimidine metabolism; dTTP biosynthesis. Functionally, catalyzes the reductive methylation of 2'-deoxyuridine-5'-monophosphate (dUMP) to 2'-deoxythymidine-5'-monophosphate (dTMP) while utilizing 5,10-methylenetetrahydrofolate (mTHF) as the methyl donor and reductant in the reaction, yielding dihydrofolate (DHF) as a by-product. This enzymatic reaction provides an intracellular de novo source of dTMP, an essential precursor for DNA biosynthesis. In Cereibacter sphaeroides (strain ATCC 17029 / ATH 2.4.9) (Rhodobacter sphaeroides), this protein is Thymidylate synthase.